The primary structure comprises 208 residues: Thymidylate kinase (208 aa).

9-16 serves as a coordination point for ATP; sequence GGEGCGKS.

Belongs to the thymidylate kinase family.

It carries out the reaction dTMP + ATP = dTDP + ADP. Functionally, phosphorylation of dTMP to form dTDP in both de novo and salvage pathways of dTTP synthesis. This is Thymidylate kinase from Dehalococcoides mccartyi (strain CBDB1).